A 218-amino-acid chain; its full sequence is Adenylate kinase (218 aa).

Residue 10 to 15 (GAGKGT) participates in ATP binding. The tract at residues 30-59 (STGDMLRAAVKAGTPLGIEAKKVMDAGGLM) is NMP. Residues T31, R36, 57–59 (GLM), 85–88 (GYPR), and Q92 contribute to the AMP site. The LID stretch occupies residues 122 to 159 (GRWVHLASGRSYNTQSNPPKVAGQDDITGEALIQRDDD). Residues R123 and 132–133 (SY) contribute to the ATP site. 2 residues coordinate AMP: R156 and R167. Residue G203 coordinates ATP.

It belongs to the adenylate kinase family. In terms of assembly, monomer.

It localises to the cytoplasm. The enzyme catalyses AMP + ATP = 2 ADP. It functions in the pathway purine metabolism; AMP biosynthesis via salvage pathway; AMP from ADP: step 1/1. Its function is as follows. Catalyzes the reversible transfer of the terminal phosphate group between ATP and AMP. Plays an important role in cellular energy homeostasis and in adenine nucleotide metabolism. The polypeptide is Adenylate kinase (Bordetella avium (strain 197N)).